The chain runs to 74 residues: Large ribosomal subunit protein uL29 (74 aa).

It belongs to the universal ribosomal protein uL29 family.

In Nostoc sp. (strain PCC 7120 / SAG 25.82 / UTEX 2576), this protein is Large ribosomal subunit protein uL29.